The following is a 202-amino-acid chain: Translation initiation factor IF-3 (202 aa).

The protein belongs to the IF-3 family. As to quaternary structure, monomer.

The protein resides in the cytoplasm. Functionally, IF-3 binds to the 30S ribosomal subunit and shifts the equilibrium between 70S ribosomes and their 50S and 30S subunits in favor of the free subunits, thus enhancing the availability of 30S subunits on which protein synthesis initiation begins. The protein is Translation initiation factor IF-3 of Prochlorococcus marinus (strain NATL2A).